We begin with the raw amino-acid sequence, 133 residues long: Large ribosomal subunit protein bL17 (133 aa).

This sequence belongs to the bacterial ribosomal protein bL17 family. Part of the 50S ribosomal subunit. Contacts protein L32.

The protein is Large ribosomal subunit protein bL17 of Pseudoalteromonas translucida (strain TAC 125).